The chain runs to 413 residues: Serine hydroxymethyltransferase (413 aa).

(6S)-5,6,7,8-tetrahydrofolate-binding positions include leucine 117 and 121–123; that span reads GHL. Lysine 226 is subject to N6-(pyridoxal phosphate)lysine. (6S)-5,6,7,8-tetrahydrofolate contacts are provided by residues glutamate 239 and 349 to 351; that span reads SPF.

It belongs to the SHMT family. As to quaternary structure, homodimer. Pyridoxal 5'-phosphate serves as cofactor.

It localises to the cytoplasm. It carries out the reaction (6R)-5,10-methylene-5,6,7,8-tetrahydrofolate + glycine + H2O = (6S)-5,6,7,8-tetrahydrofolate + L-serine. It functions in the pathway one-carbon metabolism; tetrahydrofolate interconversion. Its pathway is amino-acid biosynthesis; glycine biosynthesis; glycine from L-serine: step 1/1. Catalyzes the reversible interconversion of serine and glycine with tetrahydrofolate (THF) serving as the one-carbon carrier. This reaction serves as the major source of one-carbon groups required for the biosynthesis of purines, thymidylate, methionine, and other important biomolecules. Also exhibits THF-independent aldolase activity toward beta-hydroxyamino acids, producing glycine and aldehydes, via a retro-aldol mechanism. The polypeptide is Serine hydroxymethyltransferase (Bacillus cereus (strain G9842)).